Reading from the N-terminus, the 436-residue chain is UPF0597 protein YhaM (436 aa).

This sequence belongs to the UPF0597 family.

The protein is UPF0597 protein YhaM of Salmonella typhi.